A 203-amino-acid chain; its full sequence is MTQPWILGLTGGIGSGKSAAAEHFISLGVHLVDADHAARWVVEPGRPALAKIVERFGDGILLPDGQLDRAALRERIFQAPEERRWLEQLLHPLIGAEIVQYLARAESPYAILVSPLLVESGQRQMTHRVLVVDTPEHLQLQRTMLRDKVSEEQVRSILQAQARRDERLKHADDVLVNDGDLSHLQREVERLHAFYLTLRGGRA.

A DPCK domain is found at 6–203 (ILGLTGGIGS…FYLTLRGGRA (198 aa)). Residue 14 to 19 (GSGKSA) participates in ATP binding.

This sequence belongs to the CoaE family.

The protein localises to the cytoplasm. The enzyme catalyses 3'-dephospho-CoA + ATP = ADP + CoA + H(+). Its pathway is cofactor biosynthesis; coenzyme A biosynthesis; CoA from (R)-pantothenate: step 5/5. In terms of biological role, catalyzes the phosphorylation of the 3'-hydroxyl group of dephosphocoenzyme A to form coenzyme A. This is Dephospho-CoA kinase from Pseudomonas aeruginosa (strain ATCC 15692 / DSM 22644 / CIP 104116 / JCM 14847 / LMG 12228 / 1C / PRS 101 / PAO1).